Consider the following 166-residue polypeptide: Bacterial non-heme ferritin (166 aa).

The Ferritin-like diiron domain maps to 2-145 (LSKELLAALN…THIDYLTRIG (144 aa)). Residues E17, E50, H53, E94, and Q127 each coordinate Fe cation.

Belongs to the ferritin family. Prokaryotic subfamily.

The protein localises to the cytoplasm. The catalysed reaction is 4 Fe(2+) + O2 + 6 H2O = 4 iron(III) oxide-hydroxide + 12 H(+). Its function is as follows. Iron-storage protein. The chain is Bacterial non-heme ferritin (ftnA) from Staphylococcus epidermidis (strain ATCC 35984 / DSM 28319 / BCRC 17069 / CCUG 31568 / BM 3577 / RP62A).